A 197-amino-acid chain; its full sequence is Recombination protein RecR (197 aa).

The C4-type zinc-finger motif lies at 55-70; the sequence is CVQCRDFTESEICTIC. In terms of domain architecture, Toprim spans 78-173; the sequence is QQLCVVESPA…RPSRLAQGMP (96 aa).

Belongs to the RecR family.

In terms of biological role, may play a role in DNA repair. It seems to be involved in an RecBC-independent recombinational process of DNA repair. It may act with RecF and RecO. In Xanthomonas oryzae pv. oryzae (strain MAFF 311018), this protein is Recombination protein RecR.